A 764-amino-acid polypeptide reads, in one-letter code: Nucleolar transcription factor 1 (764 aa).

Residue M1 is modified to N-acetylmethionine. Positions 1 to 21 (MNGEADCPTDLEMAAPKGQDR) are disordered. 2 DNA-binding regions (HMG box) span residues 112–180 (PKKP…ARFR) and 196–264 (PEKP…RDYI). T201 is modified (phosphothreonine). Residues S273, S336, S364, S389, S412, S433, S435, S484, S495, S546, S584, and S638 each carry the phosphoserine modification. The segment at residues 298–362 (TKPPPNSYSL…DYEVELLRFL (65 aa)) is a DNA-binding region (HMG box 3). A disordered region spans residues 381–411 (NINKKQATSPASKKPAQEGGKGGSEKPKRPV). DNA-binding regions (HMG box) lie at residues 407–475 (PKRP…GGER), 482–549 (PESP…SEMR), and 568–634 (KKPP…DLWV). The tract at residues 459 to 487 (REAALKAQSERKPGGEREERGKLPESPKR) is disordered. Residues 546 to 576 (SEMRAPPAATNSSKKMKFQGEPKKPPMNGYQ) are disordered. The disordered stretch occupies residues 648-764 (YISNKRKSMT…SGDSSDSDSN (117 aa)). Positions 664–674 (PKSSRTTLQSK) are enriched in polar residues. Positions 677–745 (SEEDDEEDED…DDDEDEDNES (69 aa)) are enriched in acidic residues. Residues 746-758 (EGSSSSSSSSGDS) show a composition bias toward low complexity.

In terms of assembly, homodimer. Part of Pol I pre-initiation complex (PIC), in which Pol I core assembles with RRN3 and promoter-bound UTBF and SL1/TIF-IB complex. Interacts with TOP2A in the context of Pol I complex. Interacts with TBP. Interacts with TAF1A. Interacts with RASL11A. Binds to IRS1 and PIK3CA. Interacts with DHX33. Interacts with PHF6. Interacts with CEBPA (isoform 1 and isoform 4). Interacts with DDX11. Interacts with NOP53. Interacts with ALKBH2. In terms of processing, phosphorylated and activated by PIK3CA.

The protein localises to the nucleus. The protein resides in the nucleolus. Functionally, recognizes the ribosomal RNA gene promoter and activates transcription mediated by RNA polymerase I (Pol I) through cooperative interactions with the transcription factor SL1/TIF-IB complex. It binds specifically to the upstream control element and can activate Pol I promoter escape. The protein is Nucleolar transcription factor 1 (UBTF) of Homo sapiens (Human).